The following is a 463-amino-acid chain: MATVAATTKVPEIRDVTRIERIGAHSHIRGLGLDDALEPRQASQGMVGQLAARRAAGVVLEMIREGKIAGRAVLIAGQPGTGKTAIAMGMAQALGPDTPFTAIAGSEIFSLEMSKTEALTQAFRRSIGVRIKEETEIIEGEVVEIQIDRPATGTGSKVGKLTLKTTEMETIYDLGTKMIESLTKDKVQAGDVITIDKATGKISKLGRSFTRARDYDAMGSQTKFVQCPDGELQKRKEVVHTVSLHEIDVINSRTQGFLALFSGDTGEIKSEVREQINAKVAEWREEGKAEIIPGVLFIDEVHMLDIESFSFLNRALESDMAPVLIMATNRGITRIRGTSYQSPHGIPIDLLDRLLIVSTSPYSEKDTKQILRIRCEEEDVEMSEDAYTVLTRIGLETSLRYAIQLITAASLVCRKRKGTEVQVDDIKRVYSLFLDESRSTQYMKEYQDAFLFNELKGETMDTS.

At A2 the chain carries N-acetylalanine. Residue K9 forms a Glycyl lysine isopeptide (Lys-Gly) (interchain with G-Cter in SUMO2) linkage. 77–84 contacts ATP; the sequence is GQPGTGKT. Phosphoserine is present on S437. Glycyl lysine isopeptide (Lys-Gly) (interchain with G-Cter in SUMO2) cross-links involve residues K444 and K456.

The protein belongs to the RuvB family. In terms of assembly, forms homohexameric rings. Can form a dodecamer with RUVBL1 made of two stacked hexameric rings; however, even though RUVBL1 and RUVBL2 are present in equimolar ratio, the oligomeric status of each hexamer is not known. Oligomerization may regulate binding to nucleic acids and conversely, binding to nucleic acids may affect the dodecameric assembly. Interaction of the complex with DHX34 results in conformational changes of the N-terminus of the RUVBL2 subunits, resulting in loss of nucleotide binding ability and ATP hydrolysis of the complex. Interacts with the transcriptional activation domain of MYC. Interacts with ATF2. Component of the RNA polymerase II holoenzyme complex. May also act to bridge the LEF1/TCF1-CTNNB1 complex and TBP. Component of the NuA4 histone acetyltransferase complex which contains the catalytic subunit KAT5/TIP60 and the subunits EP400, TRRAP/PAF400, BRD8/SMAP, EPC1, DMAP1/DNMAP1, RUVBL1/TIP49, RUVBL2, ING3, actin, ACTL6A/BAF53A, MORF4L1/MRG15, MORF4L2/MRGX, MRGBP, YEATS4/GAS41, VPS72/YL1 and MEAF6. The NuA4 complex interacts with MYC and the adenovirus E1A protein. RUVBL2 interacts with EP400. Component of a NuA4-related complex which contains EP400, TRRAP/PAF400, SRCAP, BRD8/SMAP, EPC1, DMAP1/DNMAP1, RUVBL1/TIP49, RUVBL2, actin, ACTL6A/BAF53A, VPS72 and YEATS4/GAS41. Interacts with NPAT. Component of the chromatin-remodeling INO80 complex; specifically part of a complex module associated with the helicase ATP-binding and the helicase C-terminal domain of INO80. Component of some MLL1/MLL complex, at least composed of the core components KMT2A/MLL1, ASH2L, HCFC1/HCF1, WDR5 and RBBP5, as well as the facultative components BACC1, CHD8, E2F6, HSP70, INO80C, KANSL1, LAS1L, MAX, MCRS1, MGA, MYST1/MOF, PELP1, PHF20, PRP31, RING2, RUVB1/TIP49A, RUVB2/TIP49B, SENP3, TAF1, TAF4, TAF6, TAF7, TAF9 and TEX10. Interacts with IGHMBP2. Interacts with TELO2. Interacts with HINT1. Component of a SWR1-like complex. Component of the R2TP complex composed at least of RUVBL1, RUVBL2, RPAP3 and PIHD1. Component of the PAQosome complex which is responsible for the biogenesis of several protein complexes and which consists of R2TP complex members RUVBL1, RUVBL2, RPAP3 and PIH1D1, URI complex members PFDN2, PFDN6, PDRG1, UXT and URI1 as well as ASDURF, POLR2E and DNAAF10/WDR92. Interacts with ITFG1. Interacts with ZMYND10. Interacts with WAC; WAC positively regulates MTOR activity by promoting the assembly of the TTT complex composed of TELO2, TTI1 and TTI2 and the RUVBL complex composed of RUVBL1 and RUVBL2 into the TTT-RUVBL complex which leads to the dimerization of the mTORC1 complex and its subsequent activation. Forms a complex with APPL1 and APPL2. Interacts with ZNHIT2 (via HIT-type zinc finger) in the presence of ATP or ADP; shows a stronger interaction in the presence of ADP. The RUVBL1/RUVBL2 complex interacts with ZNHIT1 (via HIT-type zinc finger), ZNHIT3 (via HIT-type zinc finger), ZNHIT6 (via HIT-type zinc finger) and DDX59/ZNHIT5 (via HIT-type zinc finger) in the presence of ADP. Interacts with NOPCHAP1; the interaction is direct and disrupted upon ATP binding. Interacts with SMG1.

Its subcellular location is the nucleus matrix. The protein localises to the nucleus. The protein resides in the nucleoplasm. It localises to the cytoplasm. It is found in the membrane. Its subcellular location is the dynein axonemal particle. The enzyme catalyses ATP + H2O = ADP + phosphate + H(+). Possesses single-stranded DNA-stimulated ATPase and ATP-dependent DNA helicase (5' to 3') activity; hexamerization is thought to be critical for ATP hydrolysis and adjacent subunits in the ring-like structure contribute to the ATPase activity. Component of the NuA4 histone acetyltransferase complex which is involved in transcriptional activation of select genes principally by acetylation of nucleosomal histones H4 and H2A. This modification may both alter nucleosome-DNA interactions and promote interaction of the modified histones with other proteins which positively regulate transcription. This complex may be required for the activation of transcriptional programs associated with oncogene and proto-oncogene mediated growth induction, tumor suppressor mediated growth arrest and replicative senescence, apoptosis, and DNA repair. The NuA4 complex ATPase and helicase activities seem to be, at least in part, contributed by the association of RUVBL1 and RUVBL2 with EP400. NuA4 may also play a direct role in DNA repair when recruited to sites of DNA damage. Component of a SWR1-like complex that specifically mediates the removal of histone H2A.Z/H2AZ1 from the nucleosome. Proposed core component of the chromatin remodeling INO80 complex which exhibits DNA- and nucleosome-activated ATPase activity and catalyzes ATP-dependent nucleosome sliding. Plays an essential role in oncogenic transformation by MYC and also modulates transcriptional activation by the LEF1/TCF1-CTNNB1 complex. May also inhibit the transcriptional activity of ATF2. Involved in the endoplasmic reticulum (ER)-associated degradation (ERAD) pathway where it negatively regulates expression of ER stress response genes. May play a role in regulating the composition of the U5 snRNP complex. The polypeptide is RuvB-like 2 (Ruvbl2) (Mus musculus (Mouse)).